We begin with the raw amino-acid sequence, 501 residues long: UDP-N-acetylmuramoyl-L-alanyl-D-glutamate--2,6-diaminopimelate ligase (501 aa).

UDP-N-acetyl-alpha-D-muramoyl-L-alanyl-D-glutamate contacts are provided by residues leucine 26, serine 28, and 43–45; that span reads HQC. ATP is bound at residue 123–129; the sequence is GTNGKTT. Residues asparagine 164, 165-166, serine 192, glutamine 198, and arginine 200 each bind UDP-N-acetyl-alpha-D-muramoyl-L-alanyl-D-glutamate; that span reads TT. N6-carboxylysine is present on lysine 232. Meso-2,6-diaminopimelate is bound by residues arginine 398, 422–425, glycine 473, and glutamate 477; that span reads DNPR. The short motif at 422–425 is the Meso-diaminopimelate recognition motif element; sequence DNPR.

The protein belongs to the MurCDEF family. MurE subfamily. Mg(2+) serves as cofactor. Carboxylation is probably crucial for Mg(2+) binding and, consequently, for the gamma-phosphate positioning of ATP.

The protein resides in the cytoplasm. The catalysed reaction is UDP-N-acetyl-alpha-D-muramoyl-L-alanyl-D-glutamate + meso-2,6-diaminopimelate + ATP = UDP-N-acetyl-alpha-D-muramoyl-L-alanyl-gamma-D-glutamyl-meso-2,6-diaminopimelate + ADP + phosphate + H(+). Its pathway is cell wall biogenesis; peptidoglycan biosynthesis. Functionally, catalyzes the addition of meso-diaminopimelic acid to the nucleotide precursor UDP-N-acetylmuramoyl-L-alanyl-D-glutamate (UMAG) in the biosynthesis of bacterial cell-wall peptidoglycan. The protein is UDP-N-acetylmuramoyl-L-alanyl-D-glutamate--2,6-diaminopimelate ligase of Haemophilus ducreyi (strain 35000HP / ATCC 700724).